The chain runs to 569 residues: MSYKISRAAYANMFGPTTGDKVRLADTELFIEVEKDFTTYGEEVKFGGGKVIRDGMGQSQVTRANGAVDTVITNALIVDTWGIVKADVGLKNGRIAAIGKAGNPDTQPGITIIIGPSTEIIAGEGKILTAGGMDAHIHFICPQQIEEALMSGVTTMLGGGSGPAHGTLATTCTGAWHIERMIESFDAFPMNLALAGKGNASLPAALEEMVLAGACSLKLHEDWGTTPAAIDCCLSVADEYDVQVMIHTDTLNESGFVEDTIGAIKGRTIHAFHTEGAGGGHAPDIIKICGQSNVIPSSTNPTRPYTVNTIAEHLDMLMVCHHLSPSIPEDIAFAESRIRKETIAAEDILHDIGAFSIISSDSQAMGRVGEVAIRTWQTADKMKRQRGRLAQETGDNDNFRVKRYIAKYTINPAIAQGLSHEVGSIEVGKRADLVIWNPAFFGVKPEMVLLGGSIAAAPMGDPNASIPTPQPMHYRPMFAAYGKSLTNSSVTFVSQASLDAGLAGRLGVAKKLLAVKNTRGGISKASMIHNSLTPHIEVDPETYEVRADGELLTCEPATVLPMAQRYFLF.

The region spanning G131–F569 is the Urease domain. H136, H138, and K218 together coordinate Ni(2+). Residue K218 is modified to N6-carboxylysine. H220 contributes to the substrate binding site. 2 residues coordinate Ni(2+): H247 and H273. H321 (proton donor) is an active-site residue. Residue D361 participates in Ni(2+) binding.

Belongs to the metallo-dependent hydrolases superfamily. Urease alpha subunit family. Heterotrimer of UreA (gamma), UreB (beta) and UreC (alpha) subunits. Three heterotrimers associate to form the active enzyme. Ni cation serves as cofactor. Post-translationally, carboxylation allows a single lysine to coordinate two nickel ions.

Its subcellular location is the cytoplasm. It catalyses the reaction urea + 2 H2O + H(+) = hydrogencarbonate + 2 NH4(+). It functions in the pathway nitrogen metabolism; urea degradation; CO(2) and NH(3) from urea (urease route): step 1/1. In Rhizobium rhizogenes (strain K84 / ATCC BAA-868) (Agrobacterium radiobacter), this protein is Urease subunit alpha.